Consider the following 137-residue polypeptide: Crustacean calcium-binding protein 23 (137 aa).

EF-hand domains follow at residues 27 to 48, 62 to 97, and 100 to 135; these read RDSSWTLSKEELSRGVSQFGLD, EKKAAVEAAFKHLDKTGDGVVTVEDIKGVYSAKVVK, and ATEEEILKKFLNMFESSTSVDGKVTKKEFLDYYSGL.

Monomer or disulfide-linked dimers.

In terms of biological role, possibly acts as a regulatory protein and not as a calcium buffer or transport protein. In Homarus americanus (American lobster), this protein is Crustacean calcium-binding protein 23.